We begin with the raw amino-acid sequence, 401 residues long: 26S proteasome regulatory subunit 6A (401 aa).

189–196 contacts ATP; that stretch reads GPPGTGKT.

This sequence belongs to the AAA ATPase family. As to quaternary structure, the 26S proteasome consists of a 20S proteasome core and two 19S regulatory subunits. The 20S proteasome core is composed of 28 subunits that are arranged in four stacked rings, resulting in a barrel-shaped structure. The two end rings are each formed by seven alpha subunits, and the two central rings are each formed by seven beta subunits. The catalytic chamber with the active sites is on the inside of the barrel.

It localises to the cytoplasm. Its subcellular location is the nucleus. In terms of biological role, acts as a regulatory subunit of the 26S proteasome which degrades poly-ubiquitinated proteins in the cytoplasm and in the nucleus. It is essential for the regulated turnover of proteins and for the removal of misfolded proteins. The proteasome is a multicatalytic proteinase complex that is characterized by its ability to cleave peptides with Arg, Phe, Tyr, Leu, and Glu adjacent to the leaving group at neutral or slightly basic pH. The polypeptide is 26S proteasome regulatory subunit 6A (RPT5) (Encephalitozoon cuniculi (strain GB-M1) (Microsporidian parasite)).